The following is a 435-amino-acid chain: Serine/threonine-protein kinase 40 (435 aa).

A Protein kinase domain is found at 35–332 (FILGPRLGNS…DVLEALSAII (298 aa)). ATP contacts are provided by residues 41 to 49 (LGNSPVPSI) and Lys66. Catalysis depends on Asp197, which acts as the Proton acceptor.

This sequence belongs to the protein kinase superfamily. CAMK Ser/Thr protein kinase family.

It localises to the nucleus. The protein localises to the cytoplasm. It carries out the reaction L-seryl-[protein] + ATP = O-phospho-L-seryl-[protein] + ADP + H(+). It catalyses the reaction L-threonyl-[protein] + ATP = O-phospho-L-threonyl-[protein] + ADP + H(+). In terms of biological role, may be a negative regulator of NF-kappa-B and p53-mediated gene transcription. The sequence is that of Serine/threonine-protein kinase 40 (Stk40) from Rattus norvegicus (Rat).